The following is a 304-amino-acid chain: bZIP transcription factor 50 (304 aa).

The Cytoplasmic portion of the chain corresponds to 1–222; sequence MDVEFFADLD…MQESAVLTET (222 aa). 2 disordered regions span residues 26 to 60 and 94 to 163; these read GSGVSGLFAPSPPHDAEAGSPESVSSRRPSPSREA and GEEE…ERKK. Over residues 45–59 the composition is skewed to low complexity; it reads SPESVSSRRPSPSRE. Residues 127–139 show a composition bias toward acidic residues; that stretch reads EKEDVEAEVDGDD. The 63-residue stretch at 141-203 folds into the bZIP domain; it reads MSKKKRRQMR…NMALRQSLLK (63 aa). Residues 143–167 form a basic motif region; the sequence is KKKRRQMRNRDSAMKSRERKKMYVK. The segment covering 150–163 has biased composition (basic and acidic residues); the sequence is RNRDSAMKSRERKK. Positions 169–183 are leucine-zipper; that stretch reads LETKSKYLEAECRRL. A helical membrane pass occupies residues 223 to 243; sequence LPLVSLLWLVSIVCLLPVPGL. The Lumenal segment spans residues 244-304; that stretch reads PNRNPVARSS…GPFRLAAAAC (61 aa).

It belongs to the bZIP family.

It is found in the endoplasmic reticulum membrane. The protein localises to the nucleus. Its activity is regulated as follows. Transcriptionally activated by IRE1 in response to endoplasmic reticulum (ER) stress. IRE1 cleaves a 20-bp fragment causing a frameshift of the mRNA transcript, leading to a nuclear isoform of the BZIP50 activator. Transcription factor involved in endoplasmic reticulum (ER) stress response. Acts downstream of the ER stress sensors IRE1, BZIP39 and BZIP60 to activate BiP chaperone genes. The sequence is that of bZIP transcription factor 50 from Oryza sativa subsp. japonica (Rice).